The sequence spans 247 residues: Probable transcriptional regulatory protein GAU_0635 (247 aa).

Belongs to the TACO1 family.

The protein resides in the cytoplasm. The polypeptide is Probable transcriptional regulatory protein GAU_0635 (Gemmatimonas aurantiaca (strain DSM 14586 / JCM 11422 / NBRC 100505 / T-27)).